We begin with the raw amino-acid sequence, 427 residues long: Glutamate-1-semialdehyde 2,1-aminomutase (427 aa).

The residue at position 265 (Lys-265) is an N6-(pyridoxal phosphate)lysine.

This sequence belongs to the class-III pyridoxal-phosphate-dependent aminotransferase family. HemL subfamily. As to quaternary structure, homodimer. The cofactor is pyridoxal 5'-phosphate.

It is found in the cytoplasm. It catalyses the reaction (S)-4-amino-5-oxopentanoate = 5-aminolevulinate. It participates in porphyrin-containing compound metabolism; protoporphyrin-IX biosynthesis; 5-aminolevulinate from L-glutamyl-tRNA(Glu): step 2/2. The sequence is that of Glutamate-1-semialdehyde 2,1-aminomutase from Pseudomonas fluorescens (strain SBW25).